The sequence spans 763 residues: U3 small nucleolar RNA-associated protein 25 homolog (763 aa).

The disordered stretch occupies residues 1 to 164 (MGKRRSRGRS…SQKSSEEFTD (164 aa)). Promotes p53/TP53 degradation stretches follow at residues 1 to 190 (MGKR…SQRT) and 580 to 642 (VQLP…KKEE). At Ser10 the chain carries Phosphoserine. Over residues 25 to 43 (RDFGEEHPFYDRVSKKEVK) the composition is skewed to basic and acidic residues. Phosphoserine occurs at positions 52, 60, and 64. Over residues 54–70 (DSSHSESESESEQEHVS) the composition is skewed to basic and acidic residues. Over residues 84–119 (EEEEEEEEEEEEEEEDKEEVDDSAVGDSEMNGEDGG) the composition is skewed to acidic residues. The represses p53/TP53 degradation stretch occupies residues 643–704 (LNFTHICEYT…YELPTYAHFY (62 aa)).

It belongs to the UTP25 family. Interacts with CAPN3; the interaction is required for CAPN3 translocation to the nucleolus. Phosphorylated. Phosphorylation is required to promote p53/TP53 degradation in the nucleolus which promotes cell cycle progression and liver development.

Its subcellular location is the nucleus. It is found in the nucleolus. Component of the ribosomal small subunit processome for the biogenesis of ribosomes, functions in pre-ribosomal RNA (pre-rRNA) processing. Essential for embryonic development in part through the regulation of p53 pathway. Controls the expansion growth of digestive organs and liver. Also involved in the sympathetic neuronal development. Mediates, with CAPN3, the proteasome-independent degradation of p53/TP53. The polypeptide is U3 small nucleolar RNA-associated protein 25 homolog (Rattus norvegicus (Rat)).